The following is a 144-amino-acid chain: Gonadotropin subunit beta-2 (144 aa).

The N-terminal stretch at 1–27 (MGTPVKILVVRNHILFSVVVLLAVAQS) is a signal peptide. Cystine bridges form between Cys33–Cys81, Cys47–Cys96, Cys50–Cys134, Cys58–Cys112, Cys62–Cys114, and Cys117–Cys124. Asn37 carries N-linked (GlcNAc...) asparagine glycosylation. The propeptide occupies 143-144 (VY).

The protein belongs to the glycoprotein hormones subunit beta family. As to quaternary structure, heterodimer of an alpha and a beta chain.

The protein resides in the secreted. Involved in gametogenesis and steroidogenesis. The protein is Gonadotropin subunit beta-2 (cgbb) of Cyprinus carpio (Common carp).